We begin with the raw amino-acid sequence, 878 residues long: MKKLIYYFGSNGSDGNASMKDILGNKGAGLAEMSNLKLPIPDGFTITTELCNYFYTHDNSFPKNFRNELRTAVEKLEATTGKVFGSTKNPLLLSVRSGSIVSMPGMMDTILNLGMNDEVCAALGEVCKDKRFALDSYKRFLEMYGATVLSIPSDLFEQIYERHKIQADIYRDSDVTPQLLEKIIEDFKKLHVKYAEKLITDPYEQLESAIKAVLNSWMSNRAVIYRKINNISESSGTAINIQSMVFGNLSKTSATGVIFTRSPSTGEKKLFGEFLINAQGEDIVSGTRTPLPIISDDSNSMKATMPKVFDELSKISETLEKHYLDMQDIEFTIENSKLYILQTRTAKRTAIAAIKIAVQMVEEKLISKEQALMRIDPESLNQLLHTRIDYSKGLTSIADGLPASPGAATGIIVFSPYDAEKLSHHHKVILVRHDTSPEDINGMHVSSGILTIRGGMTSHAAVVARGMGKPCVCGTNNLVIDEKKQTLIAGDLILKQDDIITIDGGTGKVFLGAVPLIQPTFSEESKLILEWADETSKLKIRTNAETVSDALVSVKFGAKGIGLCRSEHMFFDKNKIPLVREMIIAPDIDRRKLAVQKLLPLQTQDFKALFRVMGDKPVNIRLLDPPLHEFLPTTEEDKKNLASSLNLPLSMINQRLHAMHEVNPMLGHRGCRLGICSPEIYQMQVEAIFTAIFELHKEENIECKLELMIPLISNVNEIKKLKGDIYEMIHELEERYEHKFSFSLGTMIELPRAALNSKKIAEEVDYFSFGTNDLTQTTYGISRDDIASFLPYYLEERIFESDPFTTLDEEGVGELIEIAIKRGKSSNPSLKLGACGEHAGHPASIEFFHKMNLDYVSCSPYRIPIARIAAAQAKIKHG.

Positions 1–347 (MKKLIYYFGS…LYILQTRTAK (347 aa)) are N-terminal. Arg-96 lines the ATP pocket. The tract at residues 348–404 (RTAIAAIKIAVQMVEEKLISKEQALMRIDPESLNQLLHTRIDYSKGLTSIADGLPAS) is linker 1. The central stretch occupies residues 405–502 (PGAATGIIVF…ILKQDDIITI (98 aa)). Thr-457 is subject to Phosphothreonine; by PDRP1. The Tele-phosphohistidine intermediate role is filled by His-459. A linker 2 region spans residues 503–537 (DGGTGKVFLGAVPLIQPTFSEESKLILEWADETSK). The tract at residues 538–878 (LKIRTNAETV…AAAQAKIKHG (341 aa)) is C-terminal. Arg-565, Arg-621, Glu-749, Gly-770, Thr-771, Asn-772, and Asp-773 together coordinate substrate. Glu-749 provides a ligand contact to Mg(2+). Asp-773 is a binding site for Mg(2+). Cys-835 functions as the Proton donor in the catalytic mechanism.

It belongs to the PEP-utilizing enzyme family. Homodimer. Requires Mg(2+) as cofactor. In terms of processing, phosphorylation of Thr-457 in the dark inactivates the enzyme. Dephosphorylation upon light stimulation reactivates the enzyme.

It catalyses the reaction pyruvate + phosphate + ATP = phosphoenolpyruvate + AMP + diphosphate + H(+). Activated by light-induced dephosphorylation. Inhibited by dark-induced phosphorylation. Both reactions are catalyzed by PDRP1. Functionally, catalyzes the reversible phosphorylation of pyruvate and phosphate. The sequence is that of Pyruvate, phosphate dikinase (ppdK) from Rickettsia bellii (strain RML369-C).